A 474-amino-acid polypeptide reads, in one-letter code: Cytochrome c-552 (474 aa).

Residues 1–29 (MSIKHWMASSVSVTALVMTALLNITAVSA) form the signal peptide. Residue H91 participates in heme c binding. Residues C119, C122, and K123 each contribute to the heme site. Heme c contacts are provided by C157, C160, H161, C206, C209, and H210. 4 residues coordinate Ca(2+): E212, Y213, K258, and Q260. A substrate-binding site is contributed by Y213. H261 contributes to the substrate binding site. Heme c contacts are provided by H272, C279, C282, H283, H298, C311, C314, H315, and H390.

This sequence belongs to the cytochrome c-552 family. The cofactor is Ca(2+). Requires heme c as cofactor.

The protein resides in the periplasm. It carries out the reaction 6 Fe(III)-[cytochrome c] + NH4(+) + 2 H2O = 6 Fe(II)-[cytochrome c] + nitrite + 8 H(+). It functions in the pathway nitrogen metabolism; nitrate reduction (assimilation). Its function is as follows. Catalyzes the reduction of nitrite to ammonia, consuming six electrons in the process. This chain is Cytochrome c-552, found in Vibrio vulnificus (strain CMCP6).